The chain runs to 87 residues: Small ribosomal subunit protein uS15c (87 aa).

Belongs to the universal ribosomal protein uS15 family. As to quaternary structure, part of the 30S ribosomal subunit.

The protein localises to the plastid. Its subcellular location is the chloroplast. The polypeptide is Small ribosomal subunit protein uS15c (rps15) (Oenothera glazioviana (Large-flowered evening primrose)).